The following is a 413-amino-acid chain: Palmitoyltransferase ZDHHC6 (413 aa).

At M1–P24 the chain is on the cytoplasmic side. The helical transmembrane segment at I25 to W45 threads the bilayer. Over Y46–N57 the chain is Lumenal. Residues F58 to V78 traverse the membrane as a helical segment. Residues G79–S143 lie on the Cytoplasmic side of the membrane. In terms of domain architecture, DHHC spans Q99–L149. The active-site S-palmitoyl cysteine intermediate is C129. A helical membrane pass occupies residues F144 to M164. Residues T165–P194 are Lumenal-facing. Residues I195–G215 traverse the membrane as a helical segment. Residues T216–R413 are Cytoplasmic-facing. In terms of domain architecture, SH3 spans V313–C398. 3 S-palmitoyl cysteine lipidation sites follow: C328, C329, and C343. A Di-lysine motif motif is present at residues K410–R413.

It belongs to the DHHC palmitoyltransferase family. In terms of assembly, homooligomerizes. Interacts with SELENOK. In terms of processing, palmitoylated at 3 different sites by ZDHHC16. The combination of the different palmitoylation events strongly affects the quaternary assembly of ZDHHC6, its localization, stability and function. Palmitoylation at Cys-328 accelerates the turnover of ZDHHC6. Depalmitoylated by LYPLA2.

The protein resides in the endoplasmic reticulum membrane. The enzyme catalyses L-cysteinyl-[protein] + hexadecanoyl-CoA = S-hexadecanoyl-L-cysteinyl-[protein] + CoA. It carries out the reaction L-cysteinyl-[protein] + octadecanoyl-CoA = S-octadecanoyl-L-cysteinyl-[protein] + CoA. Functionally, endoplasmic reticulum palmitoyl acyltransferase that mediates palmitoylation of proteins such as AMFR, CALX, ITPR1 and TFRC. Palmitoylates calnexin (CALX), which is required for its association with the ribosome-translocon complex and efficient folding of glycosylated proteins. Mediates palmitoylation of AMFR, promoting AMFR distribution to the peripheral endoplasmic reticulum. Together with SELENOK, palmitoylates ITPR1 in immune cells, leading to regulate ITPR1 stability and function. Stearoyltransferase that mediates stearoylation of TFRC to inhibit TFRC-mediated activation of the JNK pathway and mitochondrial fragmentation. The sequence is that of Palmitoyltransferase ZDHHC6 from Bos taurus (Bovine).